Reading from the N-terminus, the 119-residue chain is Chorion class CA protein ERA.1 (119 aa).

An N-terminal signal peptide occupies residues 1-21; it reads MSTFAVLLLCVQACLIQNVYS. The segment at 22–55 is left arm; sequence QCLGRVGPGGPPLGPYGGPLGGPGYGPVGYGGCG. A central domain region spans residues 56–103; the sequence is GYGGSGIGNVAVAGELPVAGSTGVMGQVPVIGAVEFAGPACAVGSVSI. The tract at residues 104-119 is right arm; that stretch reads SGACGPTCGCGGSPYY.

It belongs to the chorion protein family.

Functionally, this protein is one of many from the eggshell of the silk moth. The polypeptide is Chorion class CA protein ERA.1 (ERA.1) (Bombyx mori (Silk moth)).